A 334-amino-acid chain; its full sequence is Tryptophan--tRNA ligase (334 aa).

Residues glutamine 11–serine 13 and glycine 19–asparagine 20 contribute to the ATP site. The 'HIGH' region motif lies at proline 12–asparagine 20. Aspartate 135 contacts L-tryptophan. ATP contacts are provided by residues glycine 147–aspartate 149, valine 186, and lysine 195–serine 199. The 'KMSKS' region motif lies at lysine 195–serine 199.

The protein belongs to the class-I aminoacyl-tRNA synthetase family. In terms of assembly, homodimer.

It localises to the cytoplasm. It catalyses the reaction tRNA(Trp) + L-tryptophan + ATP = L-tryptophyl-tRNA(Trp) + AMP + diphosphate + H(+). Its function is as follows. Catalyzes the attachment of tryptophan to tRNA(Trp). The chain is Tryptophan--tRNA ligase from Klebsiella aerogenes (Enterobacter aerogenes).